We begin with the raw amino-acid sequence, 431 residues long: 2-oxoisovalerate dehydrogenase subunit alpha, mitochondrial (431 aa).

140-142 (QYR) contacts thiamine diphosphate. K(+) contacts are provided by S189, T194, and Q195.

Belongs to the BCKDHA family. It depends on thiamine diphosphate as a cofactor.

The protein localises to the mitochondrion matrix. The catalysed reaction is N(6)-[(R)-lipoyl]-L-lysyl-[protein] + 3-methyl-2-oxobutanoate + H(+) = N(6)-[(R)-S(8)-2-methylpropanoyldihydrolipoyl]-L-lysyl-[protein] + CO2. The protein operates within lipid metabolism; fatty acid biosynthesis. The branched-chain alpha-keto dehydrogenase complex catalyzes the overall conversion of alpha-keto acids to acyl-CoA and CO(2). It contains multiple copies of three enzymatic components: branched-chain alpha-keto acid decarboxylase (E1), lipoamide acyltransferase (E2) and lipoamide dehydrogenase (E3). Required for the production of the monomethyl branched-chain fatty acids (mmBCFAs) isopentadecanoate (C15iso) and isoheptadecanoate (C17iso). The sequence is that of 2-oxoisovalerate dehydrogenase subunit alpha, mitochondrial from Caenorhabditis elegans.